We begin with the raw amino-acid sequence, 197 residues long: Translation machinery-associated protein 22 (197 aa).

Positions 102–173 (VQIKRVERNK…DVKEWLLEVY (72 aa)) constitute an SUI1 domain.

Belongs to the DENR family. In terms of assembly, interacts with the 40S ribosomal subunit.

Its subcellular location is the cytoplasm. In Aspergillus niger (strain ATCC MYA-4892 / CBS 513.88 / FGSC A1513), this protein is Translation machinery-associated protein 22 (tma22).